A 31-amino-acid polypeptide reads, in one-letter code: Chymotrypsin (31 aa).

The region spanning 1-31 (IVGGVEAVPGVWPYQAALFIIDMYFCGGSLI) is the Peptidase S1 domain.

Belongs to the peptidase S1 family.

It is found in the secreted. Its subcellular location is the extracellular space. It catalyses the reaction Preferential cleavage: Tyr-|-Xaa, Trp-|-Xaa, Phe-|-Xaa, Leu-|-Xaa.. This Penaeus monodon (Giant tiger prawn) protein is Chymotrypsin.